The chain runs to 598 residues: Aspartate--tRNA(Asp/Asn) ligase (598 aa).

Residue E170 coordinates L-aspartate. Residues 194–197 form an aspartate region; it reads QLFK. Position 216 (R216) interacts with L-aspartate. ATP is bound by residues 216-218 and Q225; that span reads RDE. Residue H448 coordinates L-aspartate. E482 lines the ATP pocket. R489 contributes to the L-aspartate binding site. 534–537 contributes to the ATP binding site; sequence GWDR. Positions 558–598 are disordered; sequence GGGVDPLTDAPAPITPQQRKESGIDAKPREDKPKEDAKSKA. Residues 575 to 598 are compositionally biased toward basic and acidic residues; that stretch reads QRKESGIDAKPREDKPKEDAKSKA.

It belongs to the class-II aminoacyl-tRNA synthetase family. Type 1 subfamily. As to quaternary structure, homodimer.

Its subcellular location is the cytoplasm. The catalysed reaction is tRNA(Asx) + L-aspartate + ATP = L-aspartyl-tRNA(Asx) + AMP + diphosphate. In terms of biological role, aspartyl-tRNA synthetase with relaxed tRNA specificity since it is able to aspartylate not only its cognate tRNA(Asp) but also tRNA(Asn). Reaction proceeds in two steps: L-aspartate is first activated by ATP to form Asp-AMP and then transferred to the acceptor end of tRNA(Asp/Asn). The chain is Aspartate--tRNA(Asp/Asn) ligase from Mycolicibacterium smegmatis (strain ATCC 700084 / mc(2)155) (Mycobacterium smegmatis).